Consider the following 262-residue polypeptide: Aminoglycoside (3'') (9) adenylyltransferase (262 aa).

The enzyme catalyses streptomycin + ATP = 3''-O-adenylylstreptomycin + diphosphate. It catalyses the reaction spectinomycin + ATP = 9-O-adenylylspectinomycin + diphosphate. Mediates bacterial resistance to the antibiotics streptomycin and spectinomycin. This is Aminoglycoside (3'') (9) adenylyltransferase from Shigella flexneri.